The chain runs to 182 residues: Late embryogenesis abundant protein 3 (182 aa).

The tract at residues 1-51 is disordered; that stretch reads MAQHQHSPQRPRDQDNTRPHDQYGIVFSVSGDDVARKQGDSFSQPDPTVAT. The short motif at 7–11 is the Nuclear localization signal (NLS) element; that stretch reads SPQRP. Residues 10 to 21 show a composition bias toward basic and acidic residues; it reads RPRDQDNTRPHD. SMP domains follow at residues 58 to 115 and 123 to 181; these read VTIG…TNEQ and VNIA…LNQQ. The interval 145–182 is disordered; that stretch reads EDAEAVVGAELRSSSEMKTTPGGVADSMSAGARLNQQL.

It belongs to the LEA type SMP family.

The protein localises to the cytoplasm. It localises to the nucleus. In terms of biological role, LEA proteins are late embryonic proteins abundant in higher plant seed embryos. The function of those proteins is not known. This Arabidopsis thaliana (Mouse-ear cress) protein is Late embryogenesis abundant protein 3.